The following is a 159-amino-acid chain: Disulfide bond formation protein B (159 aa).

Residues 1 to 8 (MQANSRAF) lie on the Cytoplasmic side of the membrane. Residues 9-25 (FLLIAVIAFGLVGYALY) form a helical membrane-spanning segment. Topologically, residues 26 to 43 (LQHVEGLQPCPLCVLQRF) are periplasmic. The cysteines at positions 35 and 38 are disulfide-linked. A helical transmembrane segment spans residues 44-57 (AFVGIGVFSLLAAL). Topologically, residues 58 to 63 (SSATRL) are cytoplasmic. The chain crosses the membrane as a helical span at residues 64-81 (LWHGLGMLSGLGGIFVAG). Over 82-136 (YHVSLLLNPKASCGIDPIENWVNALPTAKWLPQVFESDGLCTAPLPPVLGVSIPL) the chain is Periplasmic. The cysteines at positions 94 and 122 are disulfide-linked. The chain crosses the membrane as a helical span at residues 137–155 (WSLIWMVILALTLVVAMIR). The Cytoplasmic segment spans residues 156-159 (RERR).

It belongs to the DsbB family.

Its subcellular location is the cell inner membrane. Its function is as follows. Required for disulfide bond formation in some periplasmic proteins. Acts by oxidizing the DsbA protein. This Ralstonia nicotianae (strain ATCC BAA-1114 / GMI1000) (Ralstonia solanacearum) protein is Disulfide bond formation protein B.